Reading from the N-terminus, the 227-residue chain is PKHD-type hydroxylase Bamb_4479 (227 aa).

The Fe2OG dioxygenase domain maps to 80–179 (QVYPPLFNRY…RVASFFWVQS (100 aa)). 3 residues coordinate Fe cation: H98, D100, and H160. Residue R170 coordinates 2-oxoglutarate.

The cofactor is Fe(2+). It depends on L-ascorbate as a cofactor.

The polypeptide is PKHD-type hydroxylase Bamb_4479 (Burkholderia ambifaria (strain ATCC BAA-244 / DSM 16087 / CCUG 44356 / LMG 19182 / AMMD) (Burkholderia cepacia (strain AMMD))).